The primary structure comprises 107 residues: Late embryogenesis abundant protein M10 (107 aa).

Residues 1–19 (MGNLMSLVLVALLFSLSLA) form the signal peptide.

Functionally, may be involved in the acquisition of desiccation tolerance during late phase of embryogenesis. This Arabidopsis thaliana (Mouse-ear cress) protein is Late embryogenesis abundant protein M10.